Here is a 477-residue protein sequence, read N- to C-terminus: Sensor protein kinase PmrB (477 aa).

The next 2 helical transmembrane spans lie at 13 to 33 and 161 to 181; these read LLVNLLVGFVLCWLSVAALTY and LLLFYSLFPLLLALPLLGGLV. Positions 186–238 constitute an HAMP domain; that stretch reads ARGLAPLREVQAEVQQRSARHLQPIAVEAVPLEIRGLIDELNLLLERLRTALE. In terms of domain architecture, Histidine kinase spans 246-459; the sequence is DAAHEIRTPL…EVQVFLPKTQ (214 aa). A Phosphohistidine; by autocatalysis modification is found at H249. The segment at 455–477 is disordered; that stretch reads LPKTQPDATRPPARGPDSGRSHI.

It localises to the membrane. It catalyses the reaction ATP + protein L-histidine = ADP + protein N-phospho-L-histidine.. In terms of biological role, member of the two-component regulatory system PmrA/PmrB that plays a role in the regulation of resistance towards polymyxin B and cationic antimicrobial peptides in response to limiting concentrations of Mg(2+). Also autoregulates its own pmrAB operon under Mg(2+)-limiting conditions. May function as a membrane-associated protein kinase that phosphorylates PmrA in response to environmental signals leading to activation of specific gene promoters. The polypeptide is Sensor protein kinase PmrB (pmrB) (Pseudomonas aeruginosa (strain ATCC 15692 / DSM 22644 / CIP 104116 / JCM 14847 / LMG 12228 / 1C / PRS 101 / PAO1)).